We begin with the raw amino-acid sequence, 208 residues long: Cysteine-rich protein 2 (208 aa).

Positions 5–57 constitute an LIM zinc-binding 1 domain; that stretch reads CPKCDKTVCFAEKVSSLGKDWHKFCLKCERCSKTLTPGGHAEHDGKPFCHKPC. Residue Lys-23 is modified to N6-acetyllysine. The segment at 98-119 is disordered; it reads AEERKASGPPKGPSRASSVTTF. Ser-104 carries the phosphoserine modification. Residues 126 to 178 form the LIM zinc-binding 2 domain; the sequence is CPRCSKKVYFAEKVTSLGKDWHRPCLHCERCGKTLTPGGHAEHDGQPYCHKPC. An N6-acetyllysine mark is found at Lys-138 and Lys-144.

In terms of assembly, interacts with TGFB1I1.

In Pongo abelii (Sumatran orangutan), this protein is Cysteine-rich protein 2 (CRIP2).